Reading from the N-terminus, the 1088-residue chain is Myocardin-related transcription factor B (1088 aa).

Glutamate 22 carries the phosphoserine modification. The stretch at 40 to 65 (EVLQLRLQQRRTREQLVDQGIMPPLK) is one RPEL 1 repeat. The residue at position 66 (serine 66) is a Phosphoserine. RPEL repeat units follow at residues 84–109 (NFLKHKIRSRPDRSELVRMHILEETF) and 128–153 (DDLNEKIAQRPGPMELVEKNILPVDS). Disordered stretches follow at residues 165 to 310 (EDYP…NEPQ), 349 to 389 (KPLN…PSSL), 472 to 508 (AELPPTGTSNATRVENVHSPLPISPSPSEQSSLSTDD), and 528 to 553 (LSSSPLRMTNNEDSLSPTSSTLSNLE). Positions 197-213 (SAASPSEPKVSESPSPV) are enriched in low complexity. Residues 214–226 (TTNTPAQFASVSP) show a composition bias toward polar residues. Over residues 238-248 (ADQPPPRPAAP) the composition is skewed to pro residues. Residues 272-287 (NPNDKHRSKKCKDPKP) are compositionally biased toward basic and acidic residues. Residues 355 to 366 (NSNSGNSALNNA) show a composition bias toward low complexity. Residues threonine 367 and threonine 370 each carry the phosphothreonine modification. Residues 367-378 (TPNTPRQNTSTP) show a composition bias toward polar residues. The SAP domain occupies 389 to 423 (LDDLKVSELKTELKLRGLPVSGTKPDLIERLKPYQ). Residues 528-540 (LSSSPLRMTNNED) are compositionally biased toward polar residues. Serine 541 and serine 543 each carry phosphoserine. Residues 541-550 (SLSPTSSTLS) show a composition bias toward low complexity. Residues 545–601 (TSSTLSNLELDAAEKDRKLQEKEKQIEELKRKLEQEQKLVEVLKMQLEVEKRGQQQR) are a coiled coil. The segment at 563–591 (LQEKEKQIEELKRKLEQEQKLVEVLKMQL) is required for interaction with itself and with MRTFA. 2 disordered regions span residues 595–655 (KRGQ…QPVS) and 829–886 (NAPL…STQA). Lysine 628 participates in a covalent cross-link: Glycyl lysine isopeptide (Lys-Gly) (interchain with G-Cter in SUMO1). Positions 829–838 (NAPLPSLQNG) are enriched in polar residues. The segment covering 867–879 (KTKDPPRYEEAIK) has biased composition (basic and acidic residues). Residue serine 921 is modified to Phosphoserine.

As to quaternary structure, interacts with MRTFA and SRF. In terms of processing, O-glycosylated.

It localises to the nucleus. Acts as a transcriptional coactivator of serum response factor (SRF). Required for skeletal myogenic differentiation. This Homo sapiens (Human) protein is Myocardin-related transcription factor B.